The following is a 483-amino-acid chain: Regulatory protein ViaA (483 aa).

The protein belongs to the ViaA family. As to quaternary structure, homodimer. Interacts with RavA.

The protein localises to the cytoplasm. Its function is as follows. Component of the RavA-ViaA chaperone complex, which may act on the membrane to optimize the function of some of the respiratory chains. ViaA stimulates the ATPase activity of RavA. The chain is Regulatory protein ViaA from Shigella dysenteriae serotype 1 (strain Sd197).